The sequence spans 114 residues: Small ribosomal subunit protein uS17 (114 aa).

Belongs to the universal ribosomal protein uS17 family. In terms of assembly, part of the 30S ribosomal subunit.

Functionally, one of the primary rRNA binding proteins, it binds specifically to the 5'-end of 16S ribosomal RNA. The chain is Small ribosomal subunit protein uS17 from Saccharolobus solfataricus (strain ATCC 35092 / DSM 1617 / JCM 11322 / P2) (Sulfolobus solfataricus).